Here is a 447-residue protein sequence, read N- to C-terminus: Probable 3-deoxy-D-manno-octulosonic acid transferase, mitochondrial (447 aa).

The transit peptide at 1-32 (MKLGVFVYRLYRALTYGVSPLIHLHIRWRRLR) directs the protein to the mitochondrion. The active-site Proton acceptor is the E66. CMP-binding positions include 278-279 (PR), 320-322 (LGE), and 347-350 (NLSE).

This sequence belongs to the glycosyltransferase group 1 family. Glycosyltransferase 30 subfamily. As to expression, expressed in leaves, stems and flowers.

It localises to the mitochondrion. The enzyme catalyses lipid IVA (E. coli) + CMP-3-deoxy-beta-D-manno-octulosonate = alpha-Kdo-(2-&gt;6)-lipid IVA (E. coli) + CMP + H(+). The catalysed reaction is alpha-Kdo-(2-&gt;6)-lipid IVA (E. coli) + CMP-3-deoxy-beta-D-manno-octulosonate = alpha-Kdo-(2-&gt;4)-alpha-Kdo-(2-&gt;6)-lipid IVA (E. coli) + CMP + H(+). It participates in glycolipid biosynthesis; KDO(2)-lipid A biosynthesis; KDO(2)-lipid A from CMP-3-deoxy-D-manno-octulosonate and lipid IV(A): step 1/4. Its pathway is glycolipid biosynthesis; KDO(2)-lipid A biosynthesis; KDO(2)-lipid A from CMP-3-deoxy-D-manno-octulosonate and lipid IV(A): step 2/4. In terms of biological role, involved in the biosynthesis of lipid A, a phosphorylated glycolipid that in bacteria anchors the lipopolysaccharide to the outer membrane of the cell. Catalyzes the transfer of two 3-deoxy-D-manno-octulosonate (Kdo) residues from CMP-Kdo to lipid IV(A), the tetraacyldisaccharide-1,4'-bisphosphate precursor of lipid A. Lipid A-like molecules in plants may serve as structural components of the outer membranes of mitochondria and/or chloroplasts, or may be involved in signal transduction or plant defense responses. This chain is Probable 3-deoxy-D-manno-octulosonic acid transferase, mitochondrial (KDTA), found in Arabidopsis thaliana (Mouse-ear cress).